The chain runs to 207 residues: MSTRGNLFIVSAPSGAGKSSLISTLLKDKPSDKQVSVSHTTRKPRPGEVDGQHYHFITVEQFKALIAQNAFIEWAEVFGNFYGTSKLVIEQTLDKGIDVFLDIDWQGAEQVKKLMETAIGVFILPPSKAELERRLTGRGQDSQQVIDSRMAQAVSEMSHYAQYEFIIVNDDFDNALADLSAIIRSQRLTCASQQHAQNDMIVDLLAD.

Residues 5–184 (GNLFIVSAPS…ALADLSAIIR (180 aa)) enclose the Guanylate kinase-like domain. Residue 12 to 19 (APSGAGKS) coordinates ATP. The segment at 30–49 (PSDKQVSVSHTTRKPRPGEV) is disordered.

It belongs to the guanylate kinase family.

The protein localises to the cytoplasm. The catalysed reaction is GMP + ATP = GDP + ADP. In terms of biological role, essential for recycling GMP and indirectly, cGMP. The sequence is that of Guanylate kinase from Shewanella frigidimarina (strain NCIMB 400).